A 179-amino-acid chain; its full sequence is Large ribosomal subunit protein bL9 (179 aa).

The protein belongs to the bacterial ribosomal protein bL9 family.

In terms of biological role, binds to the 23S rRNA. The sequence is that of Large ribosomal subunit protein bL9 from Bartonella bacilliformis (strain ATCC 35685 / KC583 / Herrer 020/F12,63).